The chain runs to 52 residues: uncharacterized protein (52 aa).

The segment at 1 to 52 is disordered; it reads MSLRPCLTPSSMQYSDIYIPTPTPTHHTHTPTPHPHPHTHTHTHHNPNPTLF. The segment covering 35 to 45 has biased composition (basic residues); the sequence is PHPHTHTHTHH.

This is an uncharacterized protein from Saccharomyces cerevisiae (strain ATCC 204508 / S288c) (Baker's yeast).